Here is a 125-residue protein sequence, read N- to C-terminus: Small ribosomal subunit protein uS12 (125 aa).

Asp-89 carries the post-translational modification 3-methylthioaspartic acid. The interval 106–125 (GVKDRKQSRSKYGAKRPKKA) is disordered. Positions 113 to 125 (SRSKYGAKRPKKA) are enriched in basic residues.

Belongs to the universal ribosomal protein uS12 family. In terms of assembly, part of the 30S ribosomal subunit. Contacts proteins S8 and S17. May interact with IF1 in the 30S initiation complex.

In terms of biological role, with S4 and S5 plays an important role in translational accuracy. Interacts with and stabilizes bases of the 16S rRNA that are involved in tRNA selection in the A site and with the mRNA backbone. Located at the interface of the 30S and 50S subunits, it traverses the body of the 30S subunit contacting proteins on the other side and probably holding the rRNA structure together. The combined cluster of proteins S8, S12 and S17 appears to hold together the shoulder and platform of the 30S subunit. This chain is Small ribosomal subunit protein uS12, found in Azoarcus sp. (strain BH72).